Here is a 273-residue protein sequence, read N- to C-terminus: Shikimate dehydrogenase (NADP(+)) (273 aa).

Shikimate contacts are provided by residues 18–20 (SKS) and Thr-65. Lys-69 (proton acceptor) is an active-site residue. Glu-81 is a binding site for NADP(+). 2 residues coordinate shikimate: Asn-90 and Asp-105. NADP(+)-binding positions include 130-134 (GAGGA), 154-159 (NRTHSK), and Met-217. Residue Tyr-219 coordinates shikimate. Gly-240 lines the NADP(+) pocket.

Belongs to the shikimate dehydrogenase family. Homodimer.

The catalysed reaction is shikimate + NADP(+) = 3-dehydroshikimate + NADPH + H(+). The protein operates within metabolic intermediate biosynthesis; chorismate biosynthesis; chorismate from D-erythrose 4-phosphate and phosphoenolpyruvate: step 4/7. Involved in the biosynthesis of the chorismate, which leads to the biosynthesis of aromatic amino acids. Catalyzes the reversible NADPH linked reduction of 3-dehydroshikimate (DHSA) to yield shikimate (SA). The sequence is that of Shikimate dehydrogenase (NADP(+)) from Herminiimonas arsenicoxydans.